Here is a 459-residue protein sequence, read N- to C-terminus: Argininosuccinate lyase (459 aa).

It belongs to the lyase 1 family. Argininosuccinate lyase subfamily.

The protein resides in the cytoplasm. It carries out the reaction 2-(N(omega)-L-arginino)succinate = fumarate + L-arginine. It functions in the pathway amino-acid biosynthesis; L-arginine biosynthesis; L-arginine from L-ornithine and carbamoyl phosphate: step 3/3. The polypeptide is Argininosuccinate lyase (Bacillus licheniformis (strain ATCC 14580 / DSM 13 / JCM 2505 / CCUG 7422 / NBRC 12200 / NCIMB 9375 / NCTC 10341 / NRRL NRS-1264 / Gibson 46)).